Here is a 213-residue protein sequence, read N- to C-terminus: Glycerol-3-phosphate acyltransferase (213 aa).

The next 5 membrane-spanning stretches (helical) occupy residues 3-23 (ILLA…VVVS), 51-71 (KAAI…VWLA), 78-98 (DVAI…PVFF), 115-135 (AVHP…AFFF), and 140-160 (LAAL…FGMP).

It belongs to the PlsY family. Probably interacts with PlsX.

It is found in the cell inner membrane. It carries out the reaction an acyl phosphate + sn-glycerol 3-phosphate = a 1-acyl-sn-glycero-3-phosphate + phosphate. Its pathway is lipid metabolism; phospholipid metabolism. In terms of biological role, catalyzes the transfer of an acyl group from acyl-phosphate (acyl-PO(4)) to glycerol-3-phosphate (G3P) to form lysophosphatidic acid (LPA). This enzyme utilizes acyl-phosphate as fatty acyl donor, but not acyl-CoA or acyl-ACP. This chain is Glycerol-3-phosphate acyltransferase, found in Burkholderia cenocepacia (strain HI2424).